We begin with the raw amino-acid sequence, 308 residues long: Homoserine O-acetyltransferase (308 aa).

Cysteine 142 functions as the Acyl-thioester intermediate in the catalytic mechanism. Substrate is bound by residues lysine 163 and serine 192. Catalysis depends on histidine 235, which acts as the Proton acceptor. Glutamate 237 is a catalytic residue. Arginine 249 serves as a coordination point for substrate.

This sequence belongs to the MetA family.

Its subcellular location is the cytoplasm. The catalysed reaction is L-homoserine + acetyl-CoA = O-acetyl-L-homoserine + CoA. Its pathway is amino-acid biosynthesis; L-methionine biosynthesis via de novo pathway; O-acetyl-L-homoserine from L-homoserine: step 1/1. In terms of biological role, transfers an acetyl group from acetyl-CoA to L-homoserine, forming acetyl-L-homoserine. The sequence is that of Homoserine O-acetyltransferase from Agrobacterium fabrum (strain C58 / ATCC 33970) (Agrobacterium tumefaciens (strain C58)).